A 724-amino-acid polypeptide reads, in one-letter code: Probable ATP-dependent RNA helicase DDX4 (724 aa).

Positions 1–246 (MGDEDWEAEI…SDTQGPKVTY (246 aa)) are disordered. The span at 30–42 (NGDNFNRTPASSS) shows a compositional bias: polar residues. Over residues 69-78 (DAGECNKRDN) the composition is skewed to basic and acidic residues. The span at 150-162 (RGSFRGCRGGFGL) shows a compositional bias: gly residues. Over residues 195–205 (GDTSQSRSGSG) the composition is skewed to low complexity. 2 positions are modified to phosphoserine: Ser222 and Ser226. The interaction with RANBP9 stretch occupies residues 228-247 (KSEAEGGESSDTQGPKVTYI). Residues 288-316 (LTFEEANLCQTLNNNIAKAGYTKLTPVQK) carry the Q motif motif. Residues 319–502 (IPIILAGRDL…AEFLKSNYLF (184 aa)) form the Helicase ATP-binding domain. An ATP-binding site is contributed by 332 to 339 (AQTGSGKT). A DEAD box motif is present at residues 446–449 (DEAD). In terms of domain architecture, Helicase C-terminal spans 530 to 675 (KLVEILRNIG…DVPAWLEEIA (146 aa)). Positions 704-715 (LNTAGFSSSQAP) are enriched in polar residues. Residues 704–724 (LNTAGFSSSQAPNPVDDESWD) are disordered. Ser722 is subject to Phosphoserine.

This sequence belongs to the DEAD box helicase family. DDX4/VASA subfamily. Found in a mRNP complex, at least composed of TDRD1, TDRD6, TDRD7 and DDX4. Interacts with RANBP9. Interacts with RANBP10. Interacts with PIWIL2 and MAEL. Interacts with BMAL1 and CLOCK. Interacts with Tex19.1 and, probably, Tex19.2. Interacts with RBM46. Expressed only in ovary and testis. Expressed in migratory primordial germ cells in the region of the gonadal ridge in both sexes.

The protein resides in the cytoplasm. It localises to the perinuclear region. The catalysed reaction is ATP + H2O = ADP + phosphate + H(+). Its function is as follows. ATP-dependent RNA helicase required during spermatogenesis. Required to repress transposable elements and preventing their mobilization, which is essential for the germline integrity. Acts via the piRNA metabolic process, which mediates the repression of transposable elements during meiosis by forming complexes composed of piRNAs and Piwi proteins and governs the methylation and subsequent repression of transposons. Involved in the secondary piRNAs metabolic process, the production of piRNAs in fetal male germ cells through a ping-pong amplification cycle. Required for PIWIL2 slicing-triggered piRNA biogenesis: helicase activity enables utilization of one of the slice cleavage fragments generated by PIWIL2 and processing these pre-piRNAs into piRNAs. The chain is Probable ATP-dependent RNA helicase DDX4 (DDX4) from Homo sapiens (Human).